Here is a 248-residue protein sequence, read N- to C-terminus: MSTDKKNRTASHLMIWNELKWAPSEKQLAQFIHLQELLKEWNKKINLTRLVDGDDFWTAQVCDSLLPLYEELQHPEVSHKYIDIGSGCGFPGIAIAIAMPNSNITLLDSSSKKTTFLKEVSKEIGLDSRIKVVTERAEEAGRNPIFRSNFDYAIARAVASANVVAEYLVPFLNSTGQALIFKGSWSETEQQILKKALAELNAEIQRTHEFILPNNRGIRNIIRINSTNKCPHQYPRSIGKPKKQPLGY.

Residues G85, F90, 108-110, 137-138, and R156 contribute to the S-adenosyl-L-methionine site; these read DSS and AE.

The protein belongs to the methyltransferase superfamily. RNA methyltransferase RsmG family.

Its subcellular location is the cytoplasm. In terms of biological role, specifically methylates the N7 position of a guanine in 16S rRNA. This chain is Ribosomal RNA small subunit methyltransferase G, found in Prochlorococcus marinus (strain NATL2A).